We begin with the raw amino-acid sequence, 276 residues long: Rhomboid protease GlpG (276 aa).

A run of 6 helical transmembrane segments spans residues 94–114 (GPVT…MSLI), 142–162 (IFMH…WYLG), 169–189 (LGSG…GYVQ), 192–212 (FSGP…GYVW), 229–249 (LIIF…GMSM), and 250–270 (ANGA…VDTL). The active-site Nucleophile is S201. The active site involves H254.

Belongs to the peptidase S54 family.

It is found in the cell inner membrane. The catalysed reaction is Cleaves type-1 transmembrane domains using a catalytic dyad composed of serine and histidine that are contributed by different transmembrane domains.. Its function is as follows. Rhomboid-type serine protease that catalyzes intramembrane proteolysis. In Salmonella dublin (strain CT_02021853), this protein is Rhomboid protease GlpG.